The sequence spans 393 residues: Beta-1,3-galactosyltransferase 7 (393 aa).

A helical; Signal-anchor for type II membrane protein transmembrane segment spans residues 9–29; it reads VISLKWVPFLCISFFALGAIF. A disordered region spans residues 89–112; the sequence is SLDKSVSTLSSTRSSQEMVDGSET. The segment covering 93–103 has biased composition (low complexity); the sequence is SVSTLSSTRSS.

The protein belongs to the glycosyltransferase 31 family. The cofactor is Mn(2+). In terms of tissue distribution, expressed in leaves, stems, flowers and siliques.

The protein localises to the golgi apparatus membrane. It functions in the pathway protein modification; protein glycosylation. Its function is as follows. Beta-1,3-galactosyltransferase that transfers galactose from UDP-galactose to substrates with a terminal glycosyl residue. The chain is Beta-1,3-galactosyltransferase 7 (B3GALT7) from Arabidopsis thaliana (Mouse-ear cress).